Here is a 368-residue protein sequence, read N- to C-terminus: Histidinol-phosphate aminotransferase (368 aa).

Lysine 223 is modified (N6-(pyridoxal phosphate)lysine).

It belongs to the class-II pyridoxal-phosphate-dependent aminotransferase family. Histidinol-phosphate aminotransferase subfamily. Homodimer. Pyridoxal 5'-phosphate serves as cofactor.

The catalysed reaction is L-histidinol phosphate + 2-oxoglutarate = 3-(imidazol-4-yl)-2-oxopropyl phosphate + L-glutamate. The protein operates within amino-acid biosynthesis; L-histidine biosynthesis; L-histidine from 5-phospho-alpha-D-ribose 1-diphosphate: step 7/9. The protein is Histidinol-phosphate aminotransferase (hisC) of Sinorhizobium fredii (strain NBRC 101917 / NGR234).